An 83-amino-acid polypeptide reads, in one-letter code: Mu-theraphotoxin-Hhn2j 3 (83 aa).

The signal sequence occupies residues 1–21 (MKALMFLALAGLVLLFVVGYA). Residues 22–48 (SESEEKEFPIELLSKIFAVDVFKGEER) constitute a propeptide that is removed on maturation. Disulfide bonds link Cys50–Cys65, Cys57–Cys70, and Cys64–Cys77. Leu81 carries the leucine amide modification.

Belongs to the neurotoxin 10 (Hwtx-1) family. 15 (Hntx-3) subfamily. Monomer. As to expression, expressed by the venom gland.

Its subcellular location is the secreted. Its function is as follows. Lethal neurotoxin. Selectively blocks tetrodotoxin-sensitive voltage-gated sodium channels (Nav). Does not affect tetrodotoxin-resistant voltage-gated sodium channels or calcium channels. The sequence is that of Mu-theraphotoxin-Hhn2j 3 from Cyriopagopus hainanus (Chinese bird spider).